A 182-amino-acid polypeptide reads, in one-letter code: MAQRSGKITLYEGKHFTGQKLEVFGDCDNFQDRGFMNRVNSIHVESGAWVCFNHPDFRGQQFILEHGDYPDFFRWNSHSDHMGSCRPVGMHGEHFRLEIFEGCNFTGQCLEFLEDSPFLQSRGWVKNCVNTIKVYGDGAAWSPRSFGAEDFQLSSSLQSDQGPEEATTKPATTQPPFLTANL.

3 Beta/gamma crystallin 'Greek key' domains span residues 6–46 (GKIT…HVES), 47–89 (GAWV…RPVG), and 95–136 (FRLE…KVYG). The interval 153–182 (LSSSLQSDQGPEEATTKPATTQPPFLTANL) is disordered. Polar residues predominate over residues 169-182 (KPATTQPPFLTANL).

Belongs to the beta/gamma-crystallin family. Monomer. In terms of tissue distribution, not specifically expressed in eye.

The sequence is that of Gamma-crystallin N from Homo sapiens (Human).